The sequence spans 333 residues: MQKMSEKPLYRAAENPTRNADRRAGRFEEEELISKTGRHPDMVIQFQDDADDQHTSHYEGNWRHYFHKKLHIKNRLIRDWLSESLAMFLFMSLLLGGAATAHFTGKQDDPMLTAVFHGFSAVFGIYVGAGVSGGIINPALTFAVALLGRVSWRKCLVLVSAQYFGSFIASAVVYLIYYESLQNYAKTADDNGEFLQKTAGIWSTFPKPYLSMTGAIFNQIFCTMLLSIGFLSISDHKNFRPTKGLFPFAVGLLIMTVFLAFSYSAGAAMNPARDLSPRLWSLIIGYGNEVFSHNDYKWFWIPWLFPYVGALFGAVMYQIFVGVHWPDKQSTKR.

Residues 1–26 (MQKMSEKPLYRAAENPTRNADRRAGR) are disordered. 2 helical membrane-spanning segments follow: residues 85-105 (LAMF…HFTG) and 116-136 (FHGF…GGII). An NPA 1 motif is present at residues 137 to 139 (NPA). Helical transmembrane passes span 156 to 176 (LVLV…VYLI), 213 to 233 (TGAI…FLSI), and 245 to 265 (LFPF…SYSA). An NPA 2 motif is present at residues 270–272 (NPA). The chain crosses the membrane as a helical span at residues 303–323 (WLFPYVGALFGAVMYQIFVGV).

Belongs to the MIP/aquaporin (TC 1.A.8) family.

Its subcellular location is the cell membrane. Its function is as follows. Aquaglyceroporin that may modulate the water content and osmolytes during anhydrobiosis. The sequence is that of Aquaporin-1 from Milnesium tardigradum (Water bear).